We begin with the raw amino-acid sequence, 357 residues long: Protein RecA (357 aa).

An ATP-binding site is contributed by glycine 67–threonine 74. The segment at asparagine 333 to phenylalanine 357 is disordered. The segment covering alanine 348 to phenylalanine 357 has biased composition (acidic residues).

It belongs to the RecA family.

Its subcellular location is the cytoplasm. In terms of biological role, can catalyze the hydrolysis of ATP in the presence of single-stranded DNA, the ATP-dependent uptake of single-stranded DNA by duplex DNA, and the ATP-dependent hybridization of homologous single-stranded DNAs. It interacts with LexA causing its activation and leading to its autocatalytic cleavage. The protein is Protein RecA of Pectobacterium carotovorum subsp. carotovorum (strain PC1).